The sequence spans 315 residues: Glutathione synthetase (315 aa).

The ATP-grasp domain maps to 125-310 (KLFTAWFSDL…ITGMLMDAIE (186 aa)). Residue 151–207 (WEKHSDIILKPLDGMGGASIFRVKEGDPNLGVIAETLTEHGTRYCMAQNYLPAIKDG) participates in ATP binding. Positions 281 and 283 each coordinate Mg(2+).

This sequence belongs to the prokaryotic GSH synthase family. Mg(2+) serves as cofactor. Mn(2+) is required as a cofactor.

The enzyme catalyses gamma-L-glutamyl-L-cysteine + glycine + ATP = glutathione + ADP + phosphate + H(+). Its pathway is sulfur metabolism; glutathione biosynthesis; glutathione from L-cysteine and L-glutamate: step 2/2. This is Glutathione synthetase from Escherichia coli O157:H7.